The sequence spans 138 residues: MLMPKRTKFRKQQKGQFAGLSKGATFVDFGEFGMQTLERGWITSRQIEACRVAINRYLKRKGKVWIRVFPDKSVTKKPAETRMGKGKGAPDHWVAVVRPGRILFEVANVSKEDAQDALRRAAAKLGIRTRFVKRVERV.

The protein belongs to the universal ribosomal protein uL16 family. As to quaternary structure, part of the 50S ribosomal subunit.

Binds 23S rRNA and is also seen to make contacts with the A and possibly P site tRNAs. In Chlamydia muridarum (strain MoPn / Nigg), this protein is Large ribosomal subunit protein uL16.